A 595-amino-acid polypeptide reads, in one-letter code: Probable inactive glycosyltransferase 25 family member 3 (595 aa).

An N-terminal signal peptide occupies residues 1–24 (MRAAPAAPLLQLLLLLGPRPEAAG). N-linked (GlcNAc...) asparagine glycosylation is found at Asn-75, Asn-153, Asn-237, and Asn-360. The segment at 576–595 (RLDLAGGSGHSLRPHPRDEL) is disordered. Residues 592–595 (RDEL) carry the Prevents secretion from ER motif.

Belongs to the glycosyltransferase 25 family.

It localises to the endoplasmic reticulum lumen. In terms of biological role, probable cell adhesion protein involved in leukocyte transmigration across the blood-brain barrier. Does not express any beta-galactosyltransferase activity in vitro. This Bos taurus (Bovine) protein is Probable inactive glycosyltransferase 25 family member 3 (CERCAM).